The chain runs to 88 residues: Probable oxaloacetate decarboxylase gamma chain (88 aa).

A helical membrane pass occupies residues 13 to 35; the sequence is LMFSGMGFVIIFLLILIWAIGIV.

Belongs to the OadG family. In terms of assembly, heterotrimer of an alpha, a beta and a gamma subunit. It depends on Na(+) as a cofactor.

It is found in the cell membrane. It catalyses the reaction oxaloacetate + 2 Na(+)(in) + H(+) = pyruvate + 2 Na(+)(out) + CO2. In terms of biological role, catalyzes the decarboxylation of oxaloacetate coupled to Na(+) translocation. This chain is Probable oxaloacetate decarboxylase gamma chain, found in Mannheimia succiniciproducens (strain KCTC 0769BP / MBEL55E).